The chain runs to 365 residues: tRNA-specific 2-thiouridylase MnmA (365 aa).

ATP contacts are provided by residues 14 to 21 (AMSGGVDS) and leucine 40. Cysteine 108 (nucleophile) is an active-site residue. A disulfide bridge connects residues cysteine 108 and cysteine 204. Residue glycine 132 participates in ATP binding. Residues 154–156 (KDQ) are interaction with tRNA. Cysteine 204 acts as the Cysteine persulfide intermediate in catalysis.

It belongs to the MnmA/TRMU family.

Its subcellular location is the cytoplasm. It carries out the reaction S-sulfanyl-L-cysteinyl-[protein] + uridine(34) in tRNA + AH2 + ATP = 2-thiouridine(34) in tRNA + L-cysteinyl-[protein] + A + AMP + diphosphate + H(+). Catalyzes the 2-thiolation of uridine at the wobble position (U34) of tRNA, leading to the formation of s(2)U34. The chain is tRNA-specific 2-thiouridylase MnmA from Rickettsia akari (strain Hartford).